Reading from the N-terminus, the 542-residue chain is Chaperonin GroEL 2 (542 aa).

Residues 30–33 (TLGP), K51, 87–91 (DGTTT), G415, and D496 contribute to the ATP site.

The protein belongs to the chaperonin (HSP60) family. Forms a cylinder of 14 subunits composed of two heptameric rings stacked back-to-back. Interacts with the co-chaperonin GroES.

The protein localises to the cytoplasm. The catalysed reaction is ATP + H2O + a folded polypeptide = ADP + phosphate + an unfolded polypeptide.. Functionally, together with its co-chaperonin GroES, plays an essential role in assisting protein folding. The GroEL-GroES system forms a nano-cage that allows encapsulation of the non-native substrate proteins and provides a physical environment optimized to promote and accelerate protein folding. The sequence is that of Chaperonin GroEL 2 from Rhizobium etli (strain ATCC 51251 / DSM 11541 / JCM 21823 / NBRC 15573 / CFN 42).